The chain runs to 180 residues: Oligoribonuclease (180 aa).

Residues 7–170 (LIWIDLEMTG…DDIRDSINEL (164 aa)) enclose the Exonuclease domain. Tyr-128 is a catalytic residue.

It belongs to the oligoribonuclease family.

It localises to the cytoplasm. In terms of biological role, 3'-to-5' exoribonuclease specific for small oligoribonucleotides. The polypeptide is Oligoribonuclease (Marinobacter nauticus (strain ATCC 700491 / DSM 11845 / VT8) (Marinobacter aquaeolei)).